Here is a 290-residue protein sequence, read N- to C-terminus: Lipoyl synthase (290 aa).

The [4Fe-4S] cluster site is built by Cys44, Cys49, Cys55, Cys70, Cys74, Cys77, and Ser281. The Radical SAM core domain maps to 56-270; it reads WRCGTATFMI…KQIGLEKGFS (215 aa).

The protein belongs to the radical SAM superfamily. Lipoyl synthase family. It depends on [4Fe-4S] cluster as a cofactor.

It localises to the cytoplasm. It carries out the reaction [[Fe-S] cluster scaffold protein carrying a second [4Fe-4S](2+) cluster] + N(6)-octanoyl-L-lysyl-[protein] + 2 oxidized [2Fe-2S]-[ferredoxin] + 2 S-adenosyl-L-methionine + 4 H(+) = [[Fe-S] cluster scaffold protein] + N(6)-[(R)-dihydrolipoyl]-L-lysyl-[protein] + 4 Fe(3+) + 2 hydrogen sulfide + 2 5'-deoxyadenosine + 2 L-methionine + 2 reduced [2Fe-2S]-[ferredoxin]. Its pathway is protein modification; protein lipoylation via endogenous pathway; protein N(6)-(lipoyl)lysine from octanoyl-[acyl-carrier-protein]: step 2/2. Its function is as follows. Catalyzes the radical-mediated insertion of two sulfur atoms into the C-6 and C-8 positions of the octanoyl moiety bound to the lipoyl domains of lipoate-dependent enzymes, thereby converting the octanoylated domains into lipoylated derivatives. This chain is Lipoyl synthase, found in Treponema denticola (strain ATCC 35405 / DSM 14222 / CIP 103919 / JCM 8153 / KCTC 15104).